Consider the following 214-residue polypeptide: Redox-sensing transcriptional repressor Rex (214 aa).

Residues 18 to 57 (LYYRLVNQLHEKGIDRVNSKTISEALDIDSASIRRDFSYF) constitute a DNA-binding region (H-T-H motif). 92 to 97 (GVGNLG) is a binding site for NAD(+).

The protein belongs to the transcriptional regulatory Rex family. In terms of assembly, homodimer.

It localises to the cytoplasm. Functionally, modulates transcription in response to changes in cellular NADH/NAD(+) redox state. The protein is Redox-sensing transcriptional repressor Rex of Staphylococcus carnosus (strain TM300).